A 107-amino-acid chain; its full sequence is Protein Asterix (107 aa).

Residues 1–15 (MSHSHGNASSVNDPR) are compositionally biased toward polar residues. The interval 1–25 (MSHSHGNASSVNDPRQPSAAKPYIP) is disordered. The helical transmembrane segment at 82–98 (ISMAMMFAIMGLVTNYL) threads the bilayer.

This sequence belongs to the Asterix family.

The protein localises to the membrane. This is Protein Asterix from Arabidopsis thaliana (Mouse-ear cress).